Reading from the N-terminus, the 193-residue chain is Major structural subunit of bundle-forming pilus (193 aa).

Positions 1 to 13 are excised as a propeptide; the sequence is MVSKIMNKKYEKG. Leu-14 carries the N-methylleucine modification. The chain crosses the membrane as a helical span at residues 14–35; it reads LSLIESAMVLALAATVTAGVMF. A disulfide bridge links Cys-129 with Cys-179.

It belongs to the N-Me-Phe pilin family. 10 to 100 laterally aligned filaments or bundle-forming pili coalesce into rope-like bundles. These form linkages between the bacteria within the enteropathogenic E.coli (EPEC) microcolonies that are attached to epithelial cells.

It is found in the fimbrium. It localises to the membrane. Functionally, major repeating bundle-forming pilus (BFP) subunit. Is required for EPEC localized adherence. The chain is Major structural subunit of bundle-forming pilus (bfpA) from Escherichia coli O111:H-.